An 83-amino-acid chain; its full sequence is Keratin-associated protein 21-2 (83 aa).

Interacts with hair keratins.

In the hair cortex, hair keratin intermediate filaments are embedded in an interfilamentous matrix, consisting of hair keratin-associated proteins (KRTAP), which are essential for the formation of a rigid and resistant hair shaft through their extensive disulfide bond cross-linking with abundant cysteine residues of hair keratins. The matrix proteins include the high-sulfur and high-glycine-tyrosine keratins. In Homo sapiens (Human), this protein is Keratin-associated protein 21-2 (KRTAP21-2).